The sequence spans 325 residues: Methionine import ATP-binding protein MetN 3 (325 aa).

The 238-residue stretch at 2 to 239 folds into the ABC transporter domain; it reads IEVQQLCKVY…PQSALGRALL (238 aa). Position 36–43 (36–43) interacts with ATP; it reads GRSGAGKS.

The protein belongs to the ABC transporter superfamily. Methionine importer (TC 3.A.1.24) family. As to quaternary structure, the complex is composed of two ATP-binding proteins (MetN), two transmembrane proteins (MetI) and a solute-binding protein (MetQ).

The protein localises to the cell inner membrane. It catalyses the reaction L-methionine(out) + ATP + H2O = L-methionine(in) + ADP + phosphate + H(+). It carries out the reaction D-methionine(out) + ATP + H2O = D-methionine(in) + ADP + phosphate + H(+). Its function is as follows. Part of the ABC transporter complex MetNIQ involved in methionine import. Responsible for energy coupling to the transport system. This chain is Methionine import ATP-binding protein MetN 3, found in Pseudomonas fluorescens (strain ATCC BAA-477 / NRRL B-23932 / Pf-5).